A 402-amino-acid polypeptide reads, in one-letter code: Omega-3 fatty acid desaturase fat-1 (402 aa).

The next 4 helical transmembrane spans lie at 79 to 99, 101 to 121, 235 to 255, and 260 to 280; these read LVQD…FEYF, LFGY…LFVV, CVIS…IAGS, and FWYY…VTYL.

It belongs to the fatty acid desaturase type 1 family.

The protein resides in the membrane. The catalysed reaction is (9Z,12Z)-octadecadienoyl-CoA + 2 Fe(II)-[cytochrome b5] + O2 + 2 H(+) = (9Z,12Z,15Z)-octadecatrienoyl-CoA + 2 Fe(III)-[cytochrome b5] + 2 H2O. The enzyme catalyses (8Z,11Z,14Z)-eicosatrienoyl-CoA + 2 Fe(II)-[cytochrome b5] + O2 + 2 H(+) = (8Z,11Z,14Z,17Z)-eicosatetraenoyl-CoA + 2 Fe(III)-[cytochrome b5] + 2 H2O. It carries out the reaction (5Z,8Z,11Z,14Z)-eicosatetraenoyl-CoA + 2 Fe(II)-[cytochrome b5] + O2 + 2 H(+) = (5Z,8Z,11Z,14Z,17Z)-eicosapentaenoyl-CoA + 2 Fe(III)-[cytochrome b5] + 2 H2O. It catalyses the reaction (7Z,10Z,13Z,16Z)-docosatetraenoyl-CoA + 2 Fe(II)-[cytochrome b5] + O2 + 2 H(+) = (7Z,10Z,13Z,16Z,19Z)-docosapentaenoyl-CoA + 2 Fe(III)-[cytochrome b5] + 2 H2O. The catalysed reaction is (6Z,9Z,12Z)-octadecatrienoyl-CoA + 2 Fe(II)-[cytochrome b5] + O2 + 2 H(+) = (6Z,9Z,12Z,15Z)-octadecatetraenoyl-CoA + 2 Fe(III)-[cytochrome b5] + 2 H2O. It functions in the pathway lipid metabolism; polyunsaturated fatty acid biosynthesis. Its function is as follows. Omega-3 fatty acid desaturase that recognizes a range of 18- and 20-carbon omega-6 substrates. Introduces a double bond in the fatty acid chain three carbons away from terminal methyl group to biosynthesize n-3 (omega-3) polyunsaturated fatty acids (PUFAs) endogenously (PUFAs are essential for membrane structure and many cellular and physiological processes). Acts on a number of substrates like linoleoyl-CoA ((9Z,12Z)-octadecadienoyl-CoA, 18:2n-6), dihomo-gamma-linolenoyl-CoA ((8Z,11Z,14Z)-eicosatrienoyl-CoA, 20:3n-6), and arachidonoyl-CoA ((5Z,8Z,11Z,14Z)-eicosatetraenoyl-CoA, 20:4n-6), to generate alpha-linolenoyl-CoA ((9Z,12Z,15Z)-octadecatrienoyl-CoA, 18:3n-3), (8Z,11Z,14Z,17Z)-eicosatetraenoyl-CoA (20:4n-3) and (5Z,8Z,11Z,14Z,17Z)-eicosapentaenoyl-CoA (20:5n-3) respectively. Unlike plants, Caenorhabditis elegans desaturases seem to use fatty acyl-CoAs as substrates. This chain is Omega-3 fatty acid desaturase fat-1 (fat-1), found in Caenorhabditis elegans.